A 398-amino-acid polypeptide reads, in one-letter code: Enoyl-[acyl-carrier-protein] reductase [NADH] (398 aa).

NAD(+)-binding positions include 48–53, 74–75, 111–112, and 139–140; these read GASTGY, FE, DG, and LA. Tyr-225 contacts substrate. Catalysis depends on Tyr-235, which acts as the Proton donor. Residues Lys-244 and 273–275 each bind NAD(+); that span reads VVT.

The protein belongs to the TER reductase family. In terms of assembly, monomer.

The enzyme catalyses a 2,3-saturated acyl-[ACP] + NAD(+) = a (2E)-enoyl-[ACP] + NADH + H(+). Its pathway is lipid metabolism; fatty acid biosynthesis. Involved in the final reduction of the elongation cycle of fatty acid synthesis (FAS II). Catalyzes the reduction of a carbon-carbon double bond in an enoyl moiety that is covalently linked to an acyl carrier protein (ACP). The protein is Enoyl-[acyl-carrier-protein] reductase [NADH] of Variovorax paradoxus (strain S110).